Reading from the N-terminus, the 146-residue chain is MIYVDADACPVKPEILKVAERHGLEVTFVANSGLRPSRDPMVRNVIVSAGFDAADDWIAERAKDGDIVVTADVPLAVRCVGAGALVTGPTGRVFDETNIGMASAMRDLSAHLRETGESKGYNAALTSRDRSAFLETLDRLCRRVKR.

Belongs to the UPF0178 family.

The protein is UPF0178 protein R01393 of Rhizobium meliloti (strain 1021) (Ensifer meliloti).